The primary structure comprises 36 residues: Photosystem II reaction center protein X (36 aa).

A helical membrane pass occupies residues 9–29; it reads LWSIFWGGVVVALGAAALTAI.

This sequence belongs to the PsbX family. Type 1 subfamily. In terms of assembly, PSII is composed of 1 copy each of membrane proteins PsbA, PsbB, PsbC, PsbD, PsbE, PsbF, PsbH, PsbI, PsbJ, PsbK, PsbL, PsbM, PsbT, PsbX, Psb30/Ycf12, peripheral proteins PsbO, CyanoQ (PsbQ), PsbU, PsbV and a large number of cofactors. It forms dimeric complexes.

The protein localises to the cell inner membrane. In terms of biological role, involved in the binding and/or turnover of quinones at the Q(B) site of photosystem II (PSII). PSII is a light-driven water plastoquinone oxidoreductase, using light energy to abstract electrons from H(2)O, generating a proton gradient subsequently used for ATP formation. This Gloeobacter violaceus (strain ATCC 29082 / PCC 7421) protein is Photosystem II reaction center protein X.